Reading from the N-terminus, the 387-residue chain is Galactokinase (387 aa).

Substrate is bound at residue 33 to 36; sequence EHTD. Residues serine 67 and 124–130 contribute to the ATP site; that span reads GSGLSSS. Residues serine 130 and glutamate 162 each contribute to the Mg(2+) site. The active-site Proton acceptor is aspartate 174. Residue tyrosine 224 participates in substrate binding.

Belongs to the GHMP kinase family. GalK subfamily.

The protein localises to the cytoplasm. It carries out the reaction alpha-D-galactose + ATP = alpha-D-galactose 1-phosphate + ADP + H(+). It participates in carbohydrate metabolism; galactose metabolism. Functionally, catalyzes the transfer of the gamma-phosphate of ATP to D-galactose to form alpha-D-galactose-1-phosphate (Gal-1-P). This is Galactokinase from Ligilactobacillus salivarius (strain UCC118) (Lactobacillus salivarius).